We begin with the raw amino-acid sequence, 1531 residues long: MSSEKDIKSTCSKFSLSVVAAILASVSGLASCVDLHAGGQSVNELVYVGPQAVLLLDQIRDLFVGSKDSQAEGQYRLIVGDPSSFQEKDADTLPGKVEQSTLFSVTNPVVFQGVDQQDQVSSQGLICSFTSSNLDSPRDGESFLGIAFVGDSSKAGITLTDVKASLSGAALYSTEDLIFEKIKGGLEFASCSSLEQGGACAAQSILIHDCQGLQVKHCTTAVNAEGSSANDHLGFGGGAFFVTGSLSGEKSLYMPAGDMVVANCDGAISFEGNSANFANGGAIAASGKVLFVANDKKTSFIENRALSGGAIAASSDIAFQNCAELVFKGNCAIGTEDKGSLGGGAISSLGTVLLQGNHGITCDKNESASQGGAIFGKNCQISDNEGPVVFRDSTACLGGGAIAAQEIVSIQNNQAGISFEGGKASFGGGIACGSFSSAGGASVLGTIDISKNLGAISFSRTLCTTSDLGQMEYQGGGALFGENISLSENAGVLTFKDNIVKTFASNGKILGGGAILATGKVEITNNSEGISFTGNARAPQALPTQEEFPLFSKKEGRPLSSGYSGGGAILGREVAILHNAAVVFEQNRLQCSEEEATLLGCCGGGAVHGMDSTSIVGNSSVRFGNNYAMGQGVSGGALLSKTVQLAGNGSVDFSRNIASLGGGALQASEGNCELVDNGYVLFRDNRGRVYGGAISCLRGDVVISGNKGRVEFKDNIATRLYVEETVEKVEEVEPAPEQKDNNELSFLGRAEQSFITAANQALFASEDGDLSPESSISSEELAKRRECAGGAIFAKRVRIVDNQEAVVFSNNFSDIYGGAIFTGSLREEDKLDGQIPEVLISGNAGDVVFSGNSSKRDEHLPHTGGGAICTQNLTISQNTGNVLFYNNVACSGGAVRIEDHGNVLLEAFGGDIVFKGNSSFRAQGSDAIYFAGKESHITALNATEGHAIVFHDALVFENLEERKSAEVLLINSRENPGYTGSIRFLEAESKVPQCIHVQQGSLELLNGATLCSYGFKQDAGAKLVLAAGAKLKILDSGTPVQQGHAISKPEAEIESSSEPEGAHSLWIAKNAQTTVPMVDIHTISVDLASFSSSQQEGTVEAPQVIVPGGSYVRSGELNLELVNTTGTGYENHALLKNEAKVPLMSFVASGDEASAEISNLSVSDLQIHVVTPEIEEDTYGHMGDWSEAKIQDGTLVISWNPTGYRLDPQKAGALVFNALWEEGAVLSALKNARFAHNLTAQRMEFDYSTNVWGFAFGGFRTLSAENLVAIDGYKGAYGGASAGVDIQLMEDFVLGVSGAAFLGKMDSQKFDAEVSRKGVVGSVYTGFLAGSWFFKGQYSLGETQNDMKTRYGVLGESSASWTSRGVLADALVEYRSLVGPVRPTFYALHFNPYVEVSYASMKFPGFTEQGREARSFEDASLTNITIPLGMKFELAFIKGQFSEVNSLGISYAWEAYRKVEGGAVQLLEAGFDWEGAPMDLPRQELRVALENNTEWSSYFSTVLGLTAFCGGFTSTDSKLGYEANTGLRLIF.

Positions 1 to 20 are cleaved as a signal peptide; that stretch reads MSSEKDIKSTCSKFSLSVVA. The 288-residue stretch at 1244–1531 folds into the Autotransporter domain; it reads EFDYSTNVWG…EANTGLRLIF (288 aa).

This sequence belongs to the PMP outer membrane protein family.

It is found in the secreted. It localises to the cell wall. The protein resides in the cell outer membrane. This chain is Probable outer membrane protein PmpD (pmpD), found in Chlamydia trachomatis serovar D (strain ATCC VR-885 / DSM 19411 / UW-3/Cx).